Reading from the N-terminus, the 256-residue chain is CCAAT/enhancer-binding protein delta (256 aa).

Residue S2 is modified to N-acetylserine. Disordered regions lie at residues 18 to 40, 92 to 121, and 139 to 206; these read TAEPAAFYEPGRAGKPGRGAEPA, GGPARLGGPGPAPRPLKREPDWGDGDAPGS, and AAAQ…NQEM. Residue K108 forms a Glycyl lysine isopeptide (Lys-Gly) (interchain with G-Cter in SUMO) linkage. Residues 143–162 show a composition bias toward pro residues; sequence PTPPASPEPPRRSPAPPAPG. Over residues 164 to 188 the composition is skewed to basic and acidic residues; that stretch reads ARDKAAGKRGPDRGSPEYRQRRERN. One can recognise a bZIP domain in the interval 178-241; that stretch reads SPEYRQRRER…AGLRRFFKQL (64 aa). The basic motif stretch occupies residues 182–209; it reads RQRRERNNIAVRKSRDKAKRRNQEMQQK. A leucine-zipper region spans residues 213–241; that stretch reads LSAENEKLQQRVEQLTRDLAGLRRFFKQL.

Belongs to the bZIP family. C/EBP subfamily. In terms of assembly, binds DNA as a homodimer and as a heterodimer. Can form stable heterodimers with CEBPB. Can form stable heterodimers with CEBPA and CEBPE. Directly interacts with SPI1/PU.1; this interaction does not affect DNA-binding properties of each partner. Interacts with PRDM16.

The protein resides in the nucleus. Functionally, transcription activator that recognizes two different DNA motifs: the CCAAT homology common to many promoters and the enhanced core homology common to many enhancers. Important transcription factor regulating the expression of genes involved in immune and inflammatory responses. Transcriptional activator that enhances IL6 transcription alone and as heterodimer with CEBPB. The chain is CCAAT/enhancer-binding protein delta (CEBPD) from Bos taurus (Bovine).